A 176-amino-acid polypeptide reads, in one-letter code: uncharacterized protein (176 aa).

The span at 1-12 (MRLPYSSSKPIP) shows a compositional bias: polar residues. 2 disordered regions span residues 1–88 (MRLP…PQQQ) and 109–132 (VNNS…PSSS). Low complexity predominate over residues 13–24 (TNNNNNNNNTNN). Positions 37 to 46 (SYYQTQENNK) are enriched in polar residues. Low complexity predominate over residues 47 to 88 (PQQSQQHPLLQHQQQQQQQQQQQQQQQQQQQQQQQQQQPQQQ).

This is an uncharacterized protein from Dictyostelium discoideum (Social amoeba).